The primary structure comprises 485 residues: NADH-quinone oxidoreductase subunit N (485 aa).

Helical transmembrane passes span 8–28, 35–55, 71–91, 105–125, 127–147, 159–179, 203–223, 235–255, 271–291, 297–317, 326–346, 373–393, 408–430, and 455–475; these read LIAL…MLSI, FLNA…LWFV, GFAM…CTFA, FYLL…ANHL, SLFL…GYAF, YTIL…LVYA, LLAG…LVPF, PAPV…GVVM, VVLA…ALSQ, LLGY…IALQ, VGVY…VVSL, AAVM…LGFI, WWLV…RVAV, and IVVL…QPLI.

Belongs to the complex I subunit 2 family. NDH-1 is composed of 13 different subunits. Subunits NuoA, H, J, K, L, M, N constitute the membrane sector of the complex.

It is found in the cell inner membrane. It catalyses the reaction a quinone + NADH + 5 H(+)(in) = a quinol + NAD(+) + 4 H(+)(out). In terms of biological role, NDH-1 shuttles electrons from NADH, via FMN and iron-sulfur (Fe-S) centers, to quinones in the respiratory chain. The immediate electron acceptor for the enzyme in this species is believed to be ubiquinone. Couples the redox reaction to proton translocation (for every two electrons transferred, four hydrogen ions are translocated across the cytoplasmic membrane), and thus conserves the redox energy in a proton gradient. This Escherichia coli O139:H28 (strain E24377A / ETEC) protein is NADH-quinone oxidoreductase subunit N.